The primary structure comprises 123 residues: Small ribosomal subunit protein uS12cz/uS12cy (123 aa).

The protein belongs to the universal ribosomal protein uS12 family. In terms of assembly, part of the 30S ribosomal subunit.

The protein localises to the plastid. It is found in the chloroplast. With S4 and S5 plays an important role in translational accuracy. Located at the interface of the 30S and 50S subunits. The protein is Small ribosomal subunit protein uS12cz/uS12cy (rps12-A) of Coffea arabica (Arabian coffee).